The following is a 196-amino-acid chain: Dephospho-CoA kinase (196 aa).

One can recognise a DPCK domain in the interval 5 to 196 (IIGLTGGIAT…QVDIALNFEL (192 aa)). 13 to 18 (ATGKTT) contributes to the ATP binding site.

This sequence belongs to the CoaE family.

The protein resides in the cytoplasm. The catalysed reaction is 3'-dephospho-CoA + ATP = ADP + CoA + H(+). It functions in the pathway cofactor biosynthesis; coenzyme A biosynthesis; CoA from (R)-pantothenate: step 5/5. Functionally, catalyzes the phosphorylation of the 3'-hydroxyl group of dephosphocoenzyme A to form coenzyme A. In Trichormus variabilis (strain ATCC 29413 / PCC 7937) (Anabaena variabilis), this protein is Dephospho-CoA kinase.